A 103-amino-acid polypeptide reads, in one-letter code: A-type ATP synthase subunit F (103 aa).

It belongs to the V-ATPase F subunit family. In terms of assembly, has multiple subunits with at least A(3), B(3), C, D, E, F, H, I and proteolipid K(x).

The protein localises to the cell membrane. Component of the A-type ATP synthase that produces ATP from ADP in the presence of a proton gradient across the membrane. This chain is A-type ATP synthase subunit F, found in Pyrococcus furiosus (strain ATCC 43587 / DSM 3638 / JCM 8422 / Vc1).